The primary structure comprises 430 residues: Enolase (430 aa).

Residue Q165 participates in (2R)-2-phosphoglycerate binding. E207 (proton donor) is an active-site residue. D244, E287, and D314 together coordinate Mg(2+). Residues K339, R368, S369, and K390 each contribute to the (2R)-2-phosphoglycerate site. The active-site Proton acceptor is K339.

It belongs to the enolase family. Component of the RNA degradosome, a multiprotein complex involved in RNA processing and mRNA degradation. The cofactor is Mg(2+).

It localises to the cytoplasm. It is found in the secreted. The protein localises to the cell surface. It catalyses the reaction (2R)-2-phosphoglycerate = phosphoenolpyruvate + H2O. Its pathway is carbohydrate degradation; glycolysis; pyruvate from D-glyceraldehyde 3-phosphate: step 4/5. In terms of biological role, catalyzes the reversible conversion of 2-phosphoglycerate (2-PG) into phosphoenolpyruvate (PEP). It is essential for the degradation of carbohydrates via glycolysis. The polypeptide is Enolase (Xanthomonas oryzae pv. oryzae (strain MAFF 311018)).